A 307-amino-acid chain; its full sequence is MNKQAEPILLGVIGGSGFYDLPGFDIVESVNPITPWGYPASPISIARTTSGFLIAFLARHGVGHIYTPTEVPSRANIAALKSLGVLAIVSFSAVGSLREDIPPEDFVLPTQIIDRTLCARPNTFFESGCVAHVSFGDPFDQDLYEILSSCGSNLKNGSKLHTKRKGDDLTVVCMEGPAFSTRAESNLYRSWGASIINMSVIPEAKLAREAEIAYQMVCMATDYDCWRMNEEPVTVETVMEHISNNKDNAKIFLLEAVKKLEAPLLQGFLGRNLRESVQNGIQTNHKHRNPDAIRRLQFLFPNLTIPH.

Phosphate is bound by residues serine 16, 59 to 60, and 92 to 93; these read RH and SA. Methionine 198 lines the substrate pocket. Phosphate is bound at residue serine 199. 222–224 is a substrate binding site; that stretch reads DYD.

This sequence belongs to the PNP/MTAP phosphorylase family. MTAP subfamily. In terms of assembly, homotrimer.

The protein localises to the cytoplasm. Its subcellular location is the nucleus. The catalysed reaction is S-methyl-5'-thioadenosine + phosphate = 5-(methylsulfanyl)-alpha-D-ribose 1-phosphate + adenine. The protein operates within amino-acid biosynthesis; L-methionine biosynthesis via salvage pathway; S-methyl-5-thio-alpha-D-ribose 1-phosphate from S-methyl-5'-thioadenosine (phosphorylase route): step 1/1. Functionally, catalyzes the reversible phosphorylation of S-methyl-5'-thioadenosine (MTA) to adenine and 5-methylthioribose-1-phosphate. Involved in the breakdown of MTA, a major by-product of polyamine biosynthesis. Responsible for the first step in the methionine salvage pathway after MTA has been generated from S-adenosylmethionine. Has broad substrate specificity with 6-aminopurine nucleosides as preferred substrates. This Schizosaccharomyces pombe (strain 972 / ATCC 24843) (Fission yeast) protein is S-methyl-5'-thioadenosine phosphorylase.